Here is a 308-residue protein sequence, read N- to C-terminus: Ribosomal RNA small subunit methyltransferase H (308 aa).

S-adenosyl-L-methionine is bound by residues 35–37 (GGH), Asp54, Phe80, Asp101, and Gln108.

It belongs to the methyltransferase superfamily. RsmH family.

It localises to the cytoplasm. The catalysed reaction is cytidine(1402) in 16S rRNA + S-adenosyl-L-methionine = N(4)-methylcytidine(1402) in 16S rRNA + S-adenosyl-L-homocysteine + H(+). Functionally, specifically methylates the N4 position of cytidine in position 1402 (C1402) of 16S rRNA. This Mycoplasma pneumoniae (strain ATCC 29342 / M129 / Subtype 1) (Mycoplasmoides pneumoniae) protein is Ribosomal RNA small subunit methyltransferase H.